We begin with the raw amino-acid sequence, 201 residues long: MEWVWALVLLAALGSGRGERDCRVSSFRVKENFDKARFAGTWYAMAKKDPEGLFLQDNIVAEFSVDENGHMSATAKGRVRLLNNWDVCADMVGTFTDTEDPAKFKMKYWGVASFLQRGNDDHWIIDTDYDTFAVQYSCRLLNFDGTCADSYSFVFSRDPHGLPPDVQKLVRQRQEELCLSRQYRLIVHNGYCDDKSVRNLL.

The signal sequence occupies residues 1–18 (MEWVWALVLLAALGSGRG). Disulfide bonds link cysteine 22-cysteine 178, cysteine 88-cysteine 192, and cysteine 138-cysteine 147. Position 116 (glutamine 116) interacts with substrate. At arginine 139 the chain carries Omega-N-methylarginine.

The protein belongs to the calycin superfamily. Lipocalin family. In terms of assembly, interacts with TTR. Interaction with TTR prevents its loss by filtration through the kidney glomeruli. Interacts with STRA6.

Its subcellular location is the secreted. Retinol-binding protein that mediates retinol transport in blood plasma. Delivers retinol from the liver stores to the peripheral tissues. Transfers the bound all-trans retinol to STRA6, that then facilitates retinol transport across the cell membrane. This chain is Retinol-binding protein 4 (RBP4), found in Oryctolagus cuniculus (Rabbit).